Reading from the N-terminus, the 85-residue chain is Toxin Cll6 (85 aa).

The N-terminal stretch at 1–19 is a signal peptide; it reads MNSLLMIIGCLVLIGTVWT. Residues 20–83 form the LCN-type CS-alpha/beta domain; it reads KEGYLVNMKT…TWPLPGKSCS (64 aa). 4 cysteine pairs are disulfide-bonded: C31–C82, C35–C58, C44–C63, and C48–C65. S83 bears the Serine amide mark.

Belongs to the long (4 C-C) scorpion toxin superfamily. Sodium channel inhibitor family. Beta subfamily. As to expression, expressed by the venom gland.

Its subcellular location is the secreted. In terms of biological role, beta toxins bind voltage-independently at site-4 of sodium channels (Nav) and shift the voltage of activation toward more negative potentials thereby affecting sodium channel activation and promoting spontaneous and repetitive firing. The sequence is that of Toxin Cll6 from Centruroides limpidus (Mexican scorpion).